The chain runs to 301 residues: Light-independent protochlorophyllide reductase iron-sulfur ATP-binding protein (301 aa).

Positions methionine 1–glutamate 26 are disordered. ATP is bound by residues glycine 44–threonine 49 and lysine 73. Residue serine 48 coordinates Mg(2+). [4Fe-4S] cluster contacts are provided by cysteine 129 and cysteine 163. Asparagine 214–arginine 215 is a binding site for ATP.

It belongs to the NifH/BchL/ChlL family. Homodimer. Protochlorophyllide reductase is composed of three subunits; BchL, BchN and BchB. It depends on [4Fe-4S] cluster as a cofactor.

The catalysed reaction is chlorophyllide a + oxidized 2[4Fe-4S]-[ferredoxin] + 2 ADP + 2 phosphate = protochlorophyllide a + reduced 2[4Fe-4S]-[ferredoxin] + 2 ATP + 2 H2O. It participates in porphyrin-containing compound metabolism; bacteriochlorophyll biosynthesis (light-independent). Its function is as follows. Component of the dark-operative protochlorophyllide reductase (DPOR) that uses Mg-ATP and reduced ferredoxin to reduce ring D of protochlorophyllide (Pchlide) to form chlorophyllide a (Chlide). This reaction is light-independent. The L component serves as a unique electron donor to the NB-component of the complex, and binds Mg-ATP. The sequence is that of Light-independent protochlorophyllide reductase iron-sulfur ATP-binding protein from Halorhodospira halophila (strain DSM 244 / SL1) (Ectothiorhodospira halophila (strain DSM 244 / SL1)).